We begin with the raw amino-acid sequence, 431 residues long: Glucose-1-phosphate adenylyltransferase (431 aa).

Alpha-D-glucose 1-phosphate contacts are provided by residues glycine 163, 178–179 (EK), and serine 210.

This sequence belongs to the bacterial/plant glucose-1-phosphate adenylyltransferase family. In terms of assembly, homotetramer.

The enzyme catalyses alpha-D-glucose 1-phosphate + ATP + H(+) = ADP-alpha-D-glucose + diphosphate. The protein operates within glycan biosynthesis; glycogen biosynthesis. In terms of biological role, involved in the biosynthesis of ADP-glucose, a building block required for the elongation reactions to produce glycogen. Catalyzes the reaction between ATP and alpha-D-glucose 1-phosphate (G1P) to produce pyrophosphate and ADP-Glc. This is Glucose-1-phosphate adenylyltransferase from Synechococcus sp. (strain WH7803).